The chain runs to 189 residues: Elongation factor P (189 aa).

An N6-(3,6-diaminohexanoyl)-5-hydroxylysine modification is found at K34.

It belongs to the elongation factor P family. In terms of processing, may be beta-lysylated on the epsilon-amino group of Lys-34 by the combined action of EpmA and EpmB, and then hydroxylated on the C5 position of the same residue by EpmC (if this protein is present). Lysylation is critical for the stimulatory effect of EF-P on peptide-bond formation. The lysylation moiety may extend toward the peptidyltransferase center and stabilize the terminal 3-CCA end of the tRNA. Hydroxylation of the C5 position on Lys-34 may allow additional potential stabilizing hydrogen-bond interactions with the P-tRNA.

It is found in the cytoplasm. Its pathway is protein biosynthesis; polypeptide chain elongation. Functionally, involved in peptide bond synthesis. Alleviates ribosome stalling that occurs when 3 or more consecutive Pro residues or the sequence PPG is present in a protein, possibly by augmenting the peptidyl transferase activity of the ribosome. Modification of Lys-34 is required for alleviation. This Francisella philomiragia subsp. philomiragia (strain ATCC 25017 / CCUG 19701 / FSC 153 / O#319-036) protein is Elongation factor P.